The sequence spans 296 residues: Putative peptide transport system permease protein BRA1093/BS1330_II1085 (296 aa).

The next 6 helical transmembrane spans lie at 35 to 55 (IGLV…WITN), 97 to 117 (LWIG…IGIA), 131 to 151 (VMDA…SAAL), 205 to 225 (ILPN…AYAI), 229 to 249 (ATLS…GSIV), and 260 to 280 (WWIM…INLI). In terms of domain architecture, ABC transmembrane type-1 spans 97-281 (LWIGLTVAVL…ISALAINLIG (185 aa)).

The protein belongs to the binding-protein-dependent transport system permease family. The complex is composed of two ATP-binding proteins (BRA1094), two transmembrane proteins (BRA1092 and BRA1093) and a solute-binding protein (BRA1090).

The protein resides in the cell inner membrane. Its function is as follows. Probably part of an ABC transporter complex that could be involved in peptide import. Probably responsible for the translocation of the substrate across the membrane. This is Putative peptide transport system permease protein BRA1093/BS1330_II1085 from Brucella suis biovar 1 (strain 1330).